Here is a 528-residue protein sequence, read N- to C-terminus: Golgi resident protein GCP60 (528 aa).

The disordered stretch occupies residues 1–71 (MAAVLNAERL…EAAAGGAAEE (71 aa)). A2 carries the post-translational modification N-acetylalanine; in Golgi resident protein GCP60, N-terminally processed. At S13 the chain carries Phosphoserine. The residue at position 18 (T18) is a Phosphothreonine. A phosphoserine mark is found at S20, S43, and S47. Residues 34–45 (LLPPPLPPPSPP) are compositionally biased toward pro residues. Over residues 54-69 (SGEQPEPGEAAAGGAA) the composition is skewed to low complexity. An ACB domain is found at 83–174 (LEELYGLALR…LNRCCHLFST (92 aa)). The stretch at 174–257 (TYVASHKIEK…AALNSQTAVQ (84 aa)) forms a coiled coil. A disordered region spans residues 182 to 230 (EKEEQEKKRKEEEERRRREEEERERLQKEEEKRRREEEERLRREEEERR). Residues 182-240 (EKEEQEKKRKEEEERRRREEEERERLQKEEEKRRREEEERLRREEEERRRIEEERLRLE) are charged amino-acid region (CAR). Positions 241–308 (QQKQQIMAAL…QQQAALQKQQ (68 aa)) are q domain; Interaction with PI4KB, TBC1D22A and TBC1D22B. Residues 335-362 (NGQAKTHTDSSEKELEPEAAEEALENGP) form a disordered region. Basic and acidic residues predominate over residues 340–350 (THTDSSEKELE). The GOLD domain occupies 384 to 526 (KEKIQQDADS…SKSVYYRVYY (143 aa)). Residues 514–516 (LWR) form a membrane-binding region.

In terms of assembly, homodimer. Interacts with the C-terminal cytoplasmic domain of giantin/GOLGB1. Interacts with PBR and PKA regulatory subunit RI-alpha. Does not interact with PKA regulatory subunit RI-beta nor PKA regulatory subunit RII-alpha. Interacts (via Q domain) with PI4KB (via N-terminus). Interacts (via Q domain) with TBC1D22A and TBC1D22B; interactions with PI4KB and with TBC1D22A and TBC1D22B are mutually exclusive. Interacts with C10ORF76 and RAB11B. As to quaternary structure, (Microbial infection) Interacts (via GOLD domain) with 3A proteins from various picornaviruses, including poliovirus, enterovirus A71, enterovirus D68, hepatitis A virus, human parechovirus 1, poliovirus, Human rhinovirus-14 (Hrv-14), coysackievirus B2, coysackievirus B3, coysackievirus B5, Aichi virus and human klassevirus. Interacts (via GOLD domain) with Aichi virus protein 3A; this interaction allows the formation of a 3A/ACBD3/PI4KB complex in order to synthesize PI4P at the viral RNA replication sites. Interacts with Aichi virus protein 2B. Interacts with Aichi virus protein 2C. Ubiquitous, with highest expression in testis and ovary.

The protein localises to the golgi apparatus membrane. It is found in the mitochondrion. Its function is as follows. Involved in the maintenance of Golgi structure by interacting with giantin, affecting protein transport between the endoplasmic reticulum and Golgi. Involved in hormone-induced steroid biosynthesis in testicular Leydig cells. Recruits PI4KB to the Golgi apparatus membrane; enhances the enzyme activity of PI4KB activity via its membrane recruitment thereby increasing the local concentration of the substrate in the vicinity of the kinase. Functionally, (Microbial infection) Plays an essential role in Aichi virus RNA replication by recruiting PI4KB at the viral replication sites. The protein is Golgi resident protein GCP60 (ACBD3) of Homo sapiens (Human).